A 101-amino-acid chain; its full sequence is uncharacterized protein (101 aa).

This is an uncharacterized protein from Escherichia coli (strain K12).